We begin with the raw amino-acid sequence, 235 residues long: MLDRDGFRPNVGIILLNQRSQVFWGKRIRTHSWQFPQGGIDRGENPEQAMFRELHEEVGLHPQHVQVLARTRDWLRYEVPDRFIRRDARGHYKGQKQIWFLLQLVGHDWDLNLRATNHPEFDAWRWNDYWVPLDVVVEFKRGVYEMALTELSRFVPRCEFRFDARPEQRNRYLRGGLHQRDLLANQSGEPGSFPAAGGIPSYATRPGAPFELPPGATFEPDPQTSFGVNAPTKKT.

The region spanning 6–149 (GFRPNVGIIL…KRGVYEMALT (144 aa)) is the Nudix hydrolase domain. The Nudix box motif lies at 38 to 59 (GGIDRGENPEQAMFRELHEEVG). The segment at 184-235 (ANQSGEPGSFPAAGGIPSYATRPGAPFELPPGATFEPDPQTSFGVNAPTKKT) is disordered.

Belongs to the Nudix hydrolase family. RppH subfamily. It depends on a divalent metal cation as a cofactor.

Accelerates the degradation of transcripts by removing pyrophosphate from the 5'-end of triphosphorylated RNA, leading to a more labile monophosphorylated state that can stimulate subsequent ribonuclease cleavage. The chain is RNA pyrophosphohydrolase from Polaromonas naphthalenivorans (strain CJ2).